A 162-amino-acid chain; its full sequence is Meiosis-specific protein HED1 (162 aa).

Positions 67–124 (KNLSENTGGGSPNGGAYLDAKKGVREQDQYQGGPSKELDRLQPPPSMKKSPPRKKKSL) are disordered. The span at 85–94 (DAKKGVREQD) shows a compositional bias: basic and acidic residues.

Interacts with RAD51.

Its subcellular location is the nucleus. It localises to the chromosome. Involved in regulation of meiotic recombination and repair of DNA damage. Inhibits RAD51-mediated recombination when the meiotic recombination machinery is impaired. The polypeptide is Meiosis-specific protein HED1 (HED1) (Saccharomyces cerevisiae (strain ATCC 204508 / S288c) (Baker's yeast)).